The primary structure comprises 1174 residues: Tyrosine-protein phosphatase non-receptor type 21 (1174 aa).

In terms of domain architecture, FERM spans 23–308 (LVARIQLLNN…ARHKFYRLNQ (286 aa)). A compositionally biased stretch (polar residues) spans 396-423 (SAHSTNSLNNPQPYLQPSPMSSNPSITG). The interval 396 to 445 (SAHSTNSLNNPQPYLQPSPMSSNPSITGSDVMRPDYLPSHRHSAVIPPSY) is disordered. A phosphoserine mark is found at S577, S589, S590, S637, and S673. Residues 673 to 692 (SQPSVFTERTQREGPEEAEG) are disordered. The span at 681-692 (RTQREGPEEAEG) shows a compositional bias: basic and acidic residues. Phosphoserine is present on residues S710 and S711. Disordered regions lie at residues 711 to 745 (SEEE…DPPG) and 769 to 806 (KRMM…TSGR). The span at 712 to 722 (EEEEDEDFEEE) shows a compositional bias: acidic residues. A compositionally biased stretch (polar residues) spans 796 to 805 (MSESDLTTSG). Phosphoserine is present on residues S797, S799, and S804. A Tyrosine-protein phosphatase domain is found at 896-1167 (VFTEYERILK…TFVYRVLIQF (272 aa)). Residues E1067, 1108 to 1114 (CSAGVGR), and Q1152 contribute to the substrate site. C1108 functions as the Phosphocysteine intermediate in the catalytic mechanism.

Belongs to the protein-tyrosine phosphatase family. Non-receptor class subfamily.

The protein localises to the cytoplasm. It is found in the cytoskeleton. It carries out the reaction O-phospho-L-tyrosyl-[protein] + H2O = L-tyrosyl-[protein] + phosphate. This chain is Tyrosine-protein phosphatase non-receptor type 21 (PTPN21), found in Homo sapiens (Human).